A 271-amino-acid chain; its full sequence is Magnesium dechelatase SGR2, chloroplastic (271 aa).

The transit peptide at 1-54 directs the protein to the chloroplast; that stretch reads MCSLATNLLLPSKMKPVFPEKLSTSSLCVTTRRSKMKNRSIVPVARLFGPAIFE.

Belongs to the staygreen family. As to quaternary structure, interacts with the light harvesting complex II (LHCII). Interacts with the chlorophyll catabolic enzyme (CCE) RCCR.

It is found in the plastid. Its subcellular location is the chloroplast thylakoid membrane. The catalysed reaction is chlorophyll a + 2 H(+) = pheophytin a + Mg(2+). Its function is as follows. Magnesium chelatase involved in chlorophyll a degradation in the chlorophyll-protein complexes of photosystem I (PSI) and photosystem II (PSII). Contributes to the degradation of PSI and PSII in the thylakoid membranes. Required to trigger chlorophyll degradation during natural and dark-induced leaf senescence. Mediates chlorophyll degradation during embryo degreening. Recombinant SGR2 possesses high dechelating activity against chlorophyll a, very low activity against chlorophyllide a, and no activity against chlorophyll b. This Arabidopsis thaliana (Mouse-ear cress) protein is Magnesium dechelatase SGR2, chloroplastic.